The sequence spans 410 residues: Testis-specific Y-encoded-like protein 6 (410 aa).

Disordered stretches follow at residues 1-31 (MSLP…EKSK) and 46-69 (PIVF…DGGH). Phosphoserine is present on Ser9. Residues 18-31 (EDPHQGQRSREKSK) show a composition bias toward basic and acidic residues.

It belongs to the nucleosome assembly protein (NAP) family.

This chain is Testis-specific Y-encoded-like protein 6 (TSPYL6), found in Homo sapiens (Human).